A 219-amino-acid chain; its full sequence is Protein-L-isoaspartate O-methyltransferase (219 aa).

Ser67 is an active-site residue.

It belongs to the methyltransferase superfamily. L-isoaspartyl/D-aspartyl protein methyltransferase family.

The protein localises to the cytoplasm. The enzyme catalyses [protein]-L-isoaspartate + S-adenosyl-L-methionine = [protein]-L-isoaspartate alpha-methyl ester + S-adenosyl-L-homocysteine. Functionally, catalyzes the methyl esterification of L-isoaspartyl residues in peptides and proteins that result from spontaneous decomposition of normal L-aspartyl and L-asparaginyl residues. It plays a role in the repair and/or degradation of damaged proteins. The polypeptide is Protein-L-isoaspartate O-methyltransferase (Cereibacter sphaeroides (strain ATCC 17029 / ATH 2.4.9) (Rhodobacter sphaeroides)).